The sequence spans 102 residues: Bowman-Birk type wound-induced proteinase inhibitor WIP1 (102 aa).

Positions 1 to 15 (MKSSPHLVLILCLQA) are cleaved as a signal peptide. Intrachain disulfides connect C46-C102, C47-C60, C50-C98, C67-C74, and C71-C90.

It belongs to the Bowman-Birk serine protease inhibitor family.

In Zea mays (Maize), this protein is Bowman-Birk type wound-induced proteinase inhibitor WIP1 (WIP1).